A 1066-amino-acid chain; its full sequence is FHIP family protein GI14169 (1066 aa).

Residues 1–11 (MSWLRTSPLRQ) are compositionally biased toward polar residues. A disordered region spans residues 1–35 (MSWLRTSPLRQSLTRSGSSSGNGSSGTATTMRQRP). A compositionally biased stretch (low complexity) spans 12 to 30 (SLTRSGSSSGNGSSGTATT). Serine 500 is subject to Phosphoserine. The segment at 651–682 (GIDVTTTTTASASDTDLEHNNNSSSISSGRRD) is disordered. The span at 655-678 (TTTTTASASDTDLEHNNNSSSISS) shows a compositional bias: low complexity. Serine 820 is subject to Phosphoserine. 2 disordered regions span residues 821 to 913 (PLHQ…GNSA) and 935 to 1007 (SGGE…TGNF). A compositionally biased stretch (low complexity) spans 822-855 (LHQQLQHQQQHQQLAQTNSHTQQQQQQQQQQAQQ). A compositionally biased stretch (polar residues) spans 856-874 (RSTYATLSAATPVQASPTS). Low complexity predominate over residues 890–913 (SRSITSMFSRRSTSSTPASNGNSA). Residues 947-971 (QDSTRGNTCETSLSTAPRQEPQTNV) are compositionally biased toward polar residues. The segment covering 972–997 (GSSSNSSIGSSTQTLSGTHSSSTLHG) has biased composition (low complexity).

The protein belongs to the FHIP family.

The chain is FHIP family protein GI14169 from Drosophila mojavensis (Fruit fly).